Here is a 552-residue protein sequence, read N- to C-terminus: Glutamate--tRNA ligase (552 aa).

The 'HIGH' region signature appears at 41 to 51 (PSPTGFQHIGG). A 'KMSKS' region motif is present at residues 293–297 (KLSKR). ATP is bound at residue lysine 296.

Belongs to the class-I aminoacyl-tRNA synthetase family. Glutamate--tRNA ligase type 1 subfamily. In terms of assembly, monomer.

Its subcellular location is the cytoplasm. It catalyses the reaction tRNA(Glu) + L-glutamate + ATP = L-glutamyl-tRNA(Glu) + AMP + diphosphate. Its function is as follows. Catalyzes the attachment of glutamate to tRNA(Glu) in a two-step reaction: glutamate is first activated by ATP to form Glu-AMP and then transferred to the acceptor end of tRNA(Glu). In Clostridium perfringens (strain SM101 / Type A), this protein is Glutamate--tRNA ligase.